The sequence spans 1995 residues: Myosin-14 (1995 aa).

A disordered region spans residues 1–46 (MAAVTMSVPGRKAPPRPGPVPEAAQPFLFTPRGPSAGGGPGSGTSP). Residue alanine 2 is modified to N-acetylalanine. Positions 51 to 101 (TARRLVWVPSELHGFEAAALRDEGEEEAEVELAESGRRLRLPRDQIQRMNP) constitute a Myosin N-terminal SH3-like domain. Serine 60 is subject to Phosphoserine. Positions 105–800 (SKAEDMAELT…VLAQLEEERD (696 aa)) constitute a Myosin motor domain. 198–205 (GESGAGKT) contacts ATP. An actin-binding region spans residues 678-700 (LSRLMATLSNTNPSFVRCIVPNH). Residues 803–832 (VTDIIVSFQAAARGYLARRAFQKRQQQQSA) enclose the IQ domain. Residues 862–1947 (LQVTRQDEVL…VTTLRNRLRR (1086 aa)) adopt a coiled-coil conformation. The residue at position 1194 (threonine 1194) is a Phosphothreonine. 4 disordered regions span residues 1371–1415 (EEAA…RRAA), 1592–1623 (QHERDLQGRDEAGEERRRQLAKQLRDAEVERD), 1905–1942 (EAEEEASRAQAGRRRLQRELEDVTESAESMNREVTTLR), and 1958–1995 (RQVFRLEEGVASDEEAEEAQPGSGPSPEPEGSPPAHPQ). Positions 1930–1942 (SAESMNREVTTLR) are enriched in polar residues. Serine 1969, serine 1980, serine 1983, and serine 1989 each carry phosphoserine. Residues 1981 to 1995 (GPSPEPEGSPPAHPQ) are compositionally biased toward pro residues.

It belongs to the TRAFAC class myosin-kinesin ATPase superfamily. Myosin family. As to quaternary structure, myosin is a hexameric protein that consists of 2 heavy chain subunits (MHC), 2 alkali light chain subunits (MLC) and 2 regulatory light chain subunits (MLC-2). As to expression, high levels of expression are found in brain (highest in corpus callosum), heart, kidney, liver, lung, small intestine, colon and skeletal muscle. Expression is low in organs composed mainly of smooth muscle, such as aorta, uterus and urinary bladder. No detectable expression is found in thymus, spleen, placenta and lymphocytes.

Cellular myosin that appears to play a role in cytokinesis, cell shape, and specialized functions such as secretion and capping. This Homo sapiens (Human) protein is Myosin-14 (MYH14).